Here is a 190-residue protein sequence, read N- to C-terminus: Putative cyclic ADP-D-ribose synthase ThsB (190 aa).

Belongs to the Thoeris B TIR-like family. As to quaternary structure, homodimer.

Its subcellular location is the cytoplasm. Its activity is regulated as follows. Activated upon phage infection. In terms of biological role, TIR-like domain-containing component of the Thoeris antiviral defense system, composed of ThsA and ThsB. Expression of ThsA and ThsB in B.subtilis (strain BEST7003) confers resistance to phages SBSphiC, SBSphiJ and SPO1. Phage infection activates this protein, generating a signal molecule that in turn activates ThsA. Functionally, probably hydrolyzes NAD(+) to make a cyclic ADP-D-ribose (cADPR) signaling molecule; might make 3'cADPR. The polypeptide is Putative cyclic ADP-D-ribose synthase ThsB (Bacillus amyloliquefaciens (strain Y2) (Bacillus amyloliquefaciens subsp. plantarum (strain B9601-Y2))).